The sequence spans 197 residues: Orotate phosphoribosyltransferase (197 aa).

5-phospho-alpha-D-ribose 1-diphosphate-binding positions include Arg87, Lys91, His93, and 112–120; that span reads DDVATTGGS. Positions 116 and 144 each coordinate orotate.

The protein belongs to the purine/pyrimidine phosphoribosyltransferase family. PyrE subfamily. As to quaternary structure, homodimer. The cofactor is Mg(2+).

The catalysed reaction is orotidine 5'-phosphate + diphosphate = orotate + 5-phospho-alpha-D-ribose 1-diphosphate. Its pathway is pyrimidine metabolism; UMP biosynthesis via de novo pathway; UMP from orotate: step 1/2. Functionally, catalyzes the transfer of a ribosyl phosphate group from 5-phosphoribose 1-diphosphate to orotate, leading to the formation of orotidine monophosphate (OMP). The polypeptide is Orotate phosphoribosyltransferase (Sulfolobus acidocaldarius (strain ATCC 33909 / DSM 639 / JCM 8929 / NBRC 15157 / NCIMB 11770)).